Reading from the N-terminus, the 280-residue chain is MSSHTPAPALYGGSANRRVTVQDLAAAKERGERWPMLTAYDALTARIFDEAGIPVLLVGDSAAMVVFGYDSTIPVTLDDMIPLTAAVSRATKRALVVADLPFGSYQAGPEQALESAARLMKEGGAQAVKLEGGHRVIAQVEALVSAGIPVMGHIGLTPQSVNVLGGYRVQGRSEEAAEALLSDAKELERAGVFSVVLECVPARVGAEITRQLTVPTIGIGAGPDTDAQVLVWQDMAGLSPRVAKFVKSYANLAEQLRDAATSFAEEVVAGTFPDEQHSYA.

2 residues coordinate Mg(2+): Asp-60 and Asp-99. 3-methyl-2-oxobutanoate-binding positions include 60–61 (DS), Asp-99, and Lys-129. Residue Glu-131 participates in Mg(2+) binding. Residue Glu-198 is the Proton acceptor of the active site.

Belongs to the PanB family. As to quaternary structure, homodecamer; pentamer of dimers. The cofactor is Mg(2+).

The protein resides in the cytoplasm. The enzyme catalyses 3-methyl-2-oxobutanoate + (6R)-5,10-methylene-5,6,7,8-tetrahydrofolate + H2O = 2-dehydropantoate + (6S)-5,6,7,8-tetrahydrofolate. It functions in the pathway cofactor biosynthesis; (R)-pantothenate biosynthesis; (R)-pantoate from 3-methyl-2-oxobutanoate: step 1/2. Its function is as follows. Catalyzes the reversible reaction in which hydroxymethyl group from 5,10-methylenetetrahydrofolate is transferred onto alpha-ketoisovalerate to form ketopantoate. The sequence is that of 3-methyl-2-oxobutanoate hydroxymethyltransferase from Thermobifida fusca (strain YX).